Here is a 714-residue protein sequence, read N- to C-terminus: Phenylalanine 2-monooxygenase precursor (714 aa).

A propeptide spans 1-15 (MGVTVIPRLLGLKDE) (removed in mature form; occupies the channel of the substrate amino acid from the outside of the protein to the interior flavin ring in the precursor). FAD-binding positions include Gly2, Gly68, and 95–96 (EA). The propeptide at 108-109 (IK) is linker peptide. Residues Arg120, 141–144 (GAMR), and Val375 contribute to the FAD site. Arg144 lines the substrate pocket. Position 537 (Tyr537) interacts with substrate. Residues 652 to 653 (SD) and 660 to 662 (GWL) each bind FAD. Gly660 is a substrate binding site.

The protein belongs to the phenylalanine 2-monooxygenase family. Heterotetramer composed of 2 alpha and 2 beta subunits. FAD serves as cofactor. Proteolytically cleaved to yield the active enzyme. Cleavage of the linkage between the 2 subunits causes reshaping of the oxygen channel and the hydrophobic environment around the flavin ring. Removal of the prosequence causes opening of the amino acid channel.

It catalyses the reaction L-phenylalanine + O2 = 2-phenylacetamide + CO2 + H2O. In terms of biological role, catalyzes both oxygenative decarboxylation and oxidative deamination, depending on the substrate used. Has high activity for L-Phe and L-Tyr, but relatively low activities for L-Met and L-Trp. L-Phe is mainly oxygenated and L-Met is mainly oxidized. The sequence is that of Phenylalanine 2-monooxygenase precursor from Pseudomonas sp.